Reading from the N-terminus, the 160-residue chain is 6,7-dimethyl-8-ribityllumazine synthase (160 aa).

5-amino-6-(D-ribitylamino)uracil-binding positions include W28, 59–61, and 81–83; these read ALE and CVI. 86–87 provides a ligand contact to (2S)-2-hydroxy-3-oxobutyl phosphate; that stretch reads ET. H89 functions as the Proton donor in the catalytic mechanism. N114 provides a ligand contact to 5-amino-6-(D-ribitylamino)uracil. R128 is a binding site for (2S)-2-hydroxy-3-oxobutyl phosphate.

This sequence belongs to the DMRL synthase family.

The enzyme catalyses (2S)-2-hydroxy-3-oxobutyl phosphate + 5-amino-6-(D-ribitylamino)uracil = 6,7-dimethyl-8-(1-D-ribityl)lumazine + phosphate + 2 H2O + H(+). It participates in cofactor biosynthesis; riboflavin biosynthesis; riboflavin from 2-hydroxy-3-oxobutyl phosphate and 5-amino-6-(D-ribitylamino)uracil: step 1/2. Its function is as follows. Catalyzes the formation of 6,7-dimethyl-8-ribityllumazine by condensation of 5-amino-6-(D-ribitylamino)uracil with 3,4-dihydroxy-2-butanone 4-phosphate. This is the penultimate step in the biosynthesis of riboflavin. This Corynebacterium jeikeium (strain K411) protein is 6,7-dimethyl-8-ribityllumazine synthase.